Here is a 391-residue protein sequence, read N- to C-terminus: Isocitrate dehydrogenase [NADP] (391 aa).

The D-threo-isocitrate site is built by Ser102, Asn104, Arg108, Arg118, and Arg142. Mg(2+) is bound at residue Asp283.

The protein belongs to the isocitrate and isopropylmalate dehydrogenases family. Homodimer. Requires Mg(2+) as cofactor. It depends on Mn(2+) as a cofactor.

It catalyses the reaction D-threo-isocitrate + NADP(+) = 2-oxoglutarate + CO2 + NADPH. Its function is as follows. Catalyzes the oxidative decarboxylation of isocitrate to 2-oxoglutarate and carbon dioxide with the concomitant reduction of NADP(+). The protein is Isocitrate dehydrogenase [NADP] (icd) of Streptococcus salivarius.